The primary structure comprises 258 residues: Phosphate import ATP-binding protein PstB (258 aa).

Residues 5–247 (IDVSGLTAYY…SQIFSNPKEK (243 aa)) enclose the ABC transporter domain. 37–44 (GPSGCGKS) contributes to the ATP binding site.

The protein belongs to the ABC transporter superfamily. Phosphate importer (TC 3.A.1.7) family. The complex is composed of two ATP-binding proteins (PstB), two transmembrane proteins (PstC and PstA) and a solute-binding protein (PstS).

The protein localises to the cell membrane. It carries out the reaction phosphate(out) + ATP + H2O = ADP + 2 phosphate(in) + H(+). Functionally, part of the ABC transporter complex PstSACB involved in phosphate import. Responsible for energy coupling to the transport system. The polypeptide is Phosphate import ATP-binding protein PstB (Frankia casuarinae (strain DSM 45818 / CECT 9043 / HFP020203 / CcI3)).